Here is a 411-residue protein sequence, read N- to C-terminus: cAMP-dependent protein kinase regulatory subunit (411 aa).

The tract at residues 1-144 (MAESAFPSAQ…SWTPPYHEKT (144 aa)) is disordered. Residues 23 to 159 (AAFQKISEED…RLKTAVSSNF (137 aa)) are dimerization and phosphorylation. Over residues 46–58 (SANAAAASSSTGS) the composition is skewed to low complexity. The segment covering 85-96 (EEDEEGADEFPP) has biased composition (acidic residues). A compositionally biased stretch (polar residues) spans 119 to 136 (TSVSAESLNPTSAGSDSW). Position 120 is a phosphoserine (serine 120). 3',5'-cyclic AMP-binding positions include 160-289 (LFSH…FLEE), glutamate 238, arginine 247, 292-411 (LLSS…PVPA), glutamate 359, and arginine 368.

It belongs to the cAMP-dependent kinase regulatory chain family. In terms of assembly, tetramer, composed of 2 regulatory (R) and 2 catalytic (C) subunits. In the presence of cAMP it dissociates into 2 active monomeric C subunits and an R dimer.

This is cAMP-dependent protein kinase regulatory subunit (pkaR) from Aspergillus niger.